A 134-amino-acid chain; its full sequence is Profilin-3 (134 aa).

C13 and C118 form a disulfide bridge. The Involved in PIP2 interaction signature appears at 84–100; the sequence is AVIRGKKGSGGITIKKT. A Phosphothreonine modification is found at T114.

It belongs to the profilin family. In terms of assembly, occurs in many kinds of cells as a complex with monomeric actin in a 1:1 ratio. Post-translationally, phosphorylated by MAP kinases.

The protein localises to the cytoplasm. It is found in the cytoskeleton. Binds to actin and affects the structure of the cytoskeleton. At high concentrations, profilin prevents the polymerization of actin, whereas it enhances it at low concentrations. This Olea europaea (Common olive) protein is Profilin-3.